Here is a 332-residue protein sequence, read N- to C-terminus: MLIAQRPTLTEENISEFRSRFVIEPLEPGFGYTLGNSLRRTLLSSIPGAAVTSIRIDGVLHEFSTVPGVKEDVTEIILNIKGLVVSSEHDEPITAYLRKTGAGQVTAADISAPAGVEIHNPELVIATLNDKAKFEVELTIERGRGYVSAQQNRNEYSEAGQIPIDSIYSPVLKVTYRVEATRAGERTDFDRLVVDVETKPAISPRDAIASAGRTLVELFGLARELNSAAEGIEIGPAPVDQVLSSELSMPIEDLDLSVRSYNCLKREGINTVSELVSLSETQLMNIRNFGQKSVDEVKDKLTEMGLSLKDSVPGFDGAHFYSGYDEDESTTI.

An alpha N-terminal domain (alpha-NTD) region spans residues 1–226 (MLIAQRPTLT…ELFGLARELN (226 aa)). The segment at 243–332 (LSSELSMPIE…GYDEDESTTI (90 aa)) is alpha C-terminal domain (alpha-CTD).

Belongs to the RNA polymerase alpha chain family. Homodimer. The RNAP catalytic core consists of 2 alpha, 1 beta, 1 beta' and 1 omega subunit. When a sigma factor is associated with the core the holoenzyme is formed, which can initiate transcription.

It catalyses the reaction RNA(n) + a ribonucleoside 5'-triphosphate = RNA(n+1) + diphosphate. Its function is as follows. DNA-dependent RNA polymerase catalyzes the transcription of DNA into RNA using the four ribonucleoside triphosphates as substrates. This is DNA-directed RNA polymerase subunit alpha from Leifsonia xyli subsp. xyli (strain CTCB07).